A 542-amino-acid polypeptide reads, in one-letter code: Aspartate kinase FUB3 (542 aa).

ACT domains are found at residues 404-472 (ILSN…VLPD) and 478-542 (LVGA…KSAI).

Belongs to the aspartokinase family.

It catalyses the reaction L-aspartate + ATP = 4-phospho-L-aspartate + ADP. It functions in the pathway mycotoxin biosynthesis. Its function is as follows. Aspartate kinase; part of the gene cluster that mediates the biosynthesis of fusaric acid, a mycotoxin with low to moderate toxicity to animals and humans, but with high phytotoxic properties. L-aspartate is suggested as fusaric acid amino acid precursor that is activated and further processed to O-acetyl-L-homoserine by cluster enzymes aspartate kinase FUB3 and homoserine O-acetyltransferase FUB5, as well as enzymes of the primary metabolism. The polyketide synthase (PKS) FUB1 generates the triketide trans-2-hexenal which is presumptively released by the hydrolase FUB4 and linked to the NRPS-bound amino acid precursor by NAD(P)-dependent dehydrogenase FUB6. FUB1, FUB4, and the non-canonical NRPS Fub8 may form an enzyme complex. Further processing of the NRPS-bound intermediate might be carried out by FUB6 and the sulfhydrylase FUB7, enabling a spontaneous electrocyclization to close the carbon backbone of fusaric acid. Dihydrofusaric acid is likely to be released via reduction by the thioester reductase (TR) domain of FUB8 whereupon the final oxidation to fusaric acid may (also) be performed by the FMN-dependent dehydrogenase FUB9. This is Aspartate kinase FUB3 from Fusarium oxysporum f. sp. lycopersici (strain 4287 / CBS 123668 / FGSC 9935 / NRRL 34936) (Fusarium vascular wilt of tomato).